A 394-amino-acid chain; its full sequence is Ribulose bisphosphate carboxylase large chain (394 aa).

Lys-5 is modified (N6,N6,N6-trimethyllysine). The substrate site is built by Asn-114 and Thr-164. Lys-166 (proton acceptor) is an active-site residue. Substrate is bound at residue Lys-168. The Mg(2+) site is built by Lys-192, Asp-194, and Glu-195. Lys-192 carries the post-translational modification N6-carboxylysine. His-285 serves as the catalytic Proton acceptor. Substrate-binding residues include Arg-286, His-318, and Ser-370.

The protein belongs to the RuBisCO large chain family. Type I subfamily. As to quaternary structure, heterohexadecamer of 8 large chains and 8 small chains. Mg(2+) is required as a cofactor.

It is found in the plastid. The protein localises to the chloroplast. It carries out the reaction 2 (2R)-3-phosphoglycerate + 2 H(+) = D-ribulose 1,5-bisphosphate + CO2 + H2O. The enzyme catalyses D-ribulose 1,5-bisphosphate + O2 = 2-phosphoglycolate + (2R)-3-phosphoglycerate + 2 H(+). In terms of biological role, ruBisCO catalyzes two reactions: the carboxylation of D-ribulose 1,5-bisphosphate, the primary event in carbon dioxide fixation, as well as the oxidative fragmentation of the pentose substrate in the photorespiration process. Both reactions occur simultaneously and in competition at the same active site. In Barclaya longifolia (Orchid lily), this protein is Ribulose bisphosphate carboxylase large chain (rbcL).